A 146-amino-acid polypeptide reads, in one-letter code: Pre-mRNA-splicing factor cwf14 (146 aa).

This sequence belongs to the BUD31 (G10) family. In terms of assembly, belongs to the 40S cdc5-associated complex (or cwf complex), a spliceosome sub-complex reminiscent of a late-stage spliceosome composed of the U2, U5 and U6 snRNAs and at least brr2, cdc5, cwf2/prp3, cwf3/syf1, cwf4/syf3, cwf5/ecm2, spp42/cwf6, cwf7/spf27, cwf8, cwf9, cwf10, cwf11, cwf12, prp45/cwf13, cwf14, cwf15, cwf16, cwf17, cwf18, cwf19, cwf20, cwf21, cwf22, cwf23, cwf24, cwf25, cwf26, cyp7/cwf27, cwf28, cwf29/ist3, lea1, msl1, prp5/cwf1, prp10, prp12/sap130, prp17, prp22, sap61, sap62, sap114, sap145, slu7, smb1, smd1, smd3, smf1, smg1 and syf2.

Its subcellular location is the nucleus. In terms of biological role, involved in mRNA splicing where it associates with cdc5 and the other cwf proteins as part of the spliceosome. The chain is Pre-mRNA-splicing factor cwf14 (cwf14) from Schizosaccharomyces pombe (strain 972 / ATCC 24843) (Fission yeast).